The following is a 116-amino-acid chain: Heme-degrading monooxygenase (116 aa).

The ABM domain maps to 2–92 (VIVTNTSKIT…EYILENKISF (91 aa)). Position 6 (asparagine 6) interacts with Fe cation. Histidine 76 provides a ligand contact to heme.

The protein belongs to the antibiotic biosynthesis monooxygenase family. Heme-degrading monooxygenase IsdG subfamily. As to quaternary structure, homodimer.

The protein resides in the cytoplasm. It catalyses the reaction heme b + 3 reduced [NADPH--hemoprotein reductase] + 3 O2 = biliverdin IXalpha + CO + Fe(2+) + 3 oxidized [NADPH--hemoprotein reductase] + 3 H2O + H(+). Its function is as follows. Allows bacterial pathogens to use the host heme as an iron source. Catalyzes the oxidative degradation of the heme macrocyclic porphyrin ring to the biliverdin in the presence of a suitable electron donor such as ascorbate or NADPH--cytochrome P450 reductase, with subsequent release of free iron. In Halalkalibacterium halodurans (strain ATCC BAA-125 / DSM 18197 / FERM 7344 / JCM 9153 / C-125) (Bacillus halodurans), this protein is Heme-degrading monooxygenase.